The following is a 346-amino-acid chain: 3-keto-steroid reductase ERG27 (346 aa).

NADP(+) contacts are provided by L19, T42, and K48. Active-site proton donor residues include S182 and Y205. The NADP(+) site is built by Y205, K209, and S241. The active-site Lowers pKa of active site Tyr is K209. A helical membrane pass occupies residues 242-262 (FSFFQYLNVFTYYGMLFLFYL). N-linked (GlcNAc...) asparagine glycosylation occurs at N272.

Belongs to the short-chain dehydrogenases/reductases (SDR) family. ERG27 subfamily. Heterotetramer of ERG25, ERG26, ERG27 and ERG28. ERG28 acts as a scaffold to tether ERG27 and other 4,4-demethylation-related enzymes, forming a demethylation enzyme complex, in the endoplasmic reticulum. Interacts with ERG25 and ERG28. Also interacts with ERG7, but only in lipid particles.

The protein resides in the endoplasmic reticulum membrane. It is found in the lipid droplet. The catalysed reaction is 3-dehydro-4alpha-methylzymosterol + NADPH + H(+) = 4alpha-methylzymosterol + NADP(+). It functions in the pathway steroid biosynthesis; zymosterol biosynthesis; zymosterol from lanosterol: step 5/6. Functionally, 3-keto-steroid reductase; part of the third module of ergosterol biosynthesis pathway that includes the late steps of the pathway. ERG27 is a catalytic component of the C-4 demethylation complex that catalyzes the reduction of the keto group on the C-3. The third module or late pathway involves the ergosterol synthesis itself through consecutive reactions that mainly occur in the endoplasmic reticulum (ER) membrane. Firstly, the squalene synthase ERG9 catalyzes the condensation of 2 farnesyl pyrophosphate moieties to form squalene, which is the precursor of all steroids. Squalene synthase is crucial for balancing the incorporation of farnesyl diphosphate (FPP) into sterol and nonsterol isoprene synthesis. Secondly, the squalene epoxidase ERG1 catalyzes the stereospecific oxidation of squalene to (S)-2,3-epoxysqualene, which is considered to be a rate-limiting enzyme in steroid biosynthesis. Then, the lanosterol synthase ERG7 catalyzes the cyclization of (S)-2,3 oxidosqualene to lanosterol, a reaction that forms the sterol core. In the next steps, lanosterol is transformed to zymosterol through a complex process involving various demethylation, reduction and desaturation reactions. The lanosterol 14-alpha-demethylase ERG11 (also known as CYP51) catalyzes C14-demethylation of lanosterol to produce 4,4'-dimethyl cholesta-8,14,24-triene-3-beta-ol, which is critical for ergosterol biosynthesis. The C-14 reductase ERG24 reduces the C14=C15 double bond of 4,4-dimethyl-cholesta-8,14,24-trienol to produce 4,4-dimethyl-cholesta-8,24-dienol. 4,4-dimethyl-cholesta-8,24-dienol is substrate of the C-4 demethylation complex ERG25-ERG26-ERG27 in which ERG25 catalyzes the three-step monooxygenation required for the demethylation of 4,4-dimethyl and 4alpha-methylsterols, ERG26 catalyzes the oxidative decarboxylation that results in a reduction of the 3-beta-hydroxy group at the C-3 carbon to an oxo group, and ERG27 is responsible for the reduction of the keto group on the C-3. ERG28 has a role as a scaffold to help anchor ERG25, ERG26 and ERG27 to the endoplasmic reticulum and ERG29 regulates the activity of the iron-containing C4-methylsterol oxidase ERG25. Then, the sterol 24-C-methyltransferase ERG6 catalyzes the methyl transfer from S-adenosyl-methionine to the C-24 of zymosterol to form fecosterol. The C-8 sterol isomerase ERG2 catalyzes the reaction which results in unsaturation at C-7 in the B ring of sterols and thus converts fecosterol to episterol. The sterol-C5-desaturase ERG3 then catalyzes the introduction of a C-5 double bond in the B ring to produce 5-dehydroepisterol. The C-22 sterol desaturase ERG5 further converts 5-dehydroepisterol into ergosta-5,7,22,24(28)-tetraen-3beta-ol by forming the C-22(23) double bond in the sterol side chain. Finally, ergosta-5,7,22,24(28)-tetraen-3beta-ol is substrate of the C-24(28) sterol reductase ERG4 to produce ergosterol. Its function is as follows. Facilitates the association of ERG7 with lipid particles preventing its digestion in the endoplasmic reticulum and the lipid particles. In Candida albicans (Yeast), this protein is 3-keto-steroid reductase ERG27.